The chain runs to 516 residues: UDP-N-acetylmuramyl-tripeptide synthetase (516 aa).

Residue serine 38 coordinates UDP-N-acetyl-alpha-D-muramoyl-L-alanyl-D-glutamate. 116-122 (GTKGKTT) contributes to the ATP binding site. Residues 162–163 (TT), serine 189, and arginine 197 each bind UDP-N-acetyl-alpha-D-muramoyl-L-alanyl-D-glutamate. An N6-carboxylysine modification is found at lysine 231.

The protein belongs to the MurCDEF family. MurE subfamily. Post-translationally, carboxylation is probably crucial for Mg(2+) binding and, consequently, for the gamma-phosphate positioning of ATP.

The protein localises to the cytoplasm. The protein operates within cell wall biogenesis; peptidoglycan biosynthesis. Catalyzes the addition of an amino acid to the nucleotide precursor UDP-N-acetylmuramoyl-L-alanyl-D-glutamate (UMAG) in the biosynthesis of bacterial cell-wall peptidoglycan. This is UDP-N-acetylmuramyl-tripeptide synthetase from Lactobacillus delbrueckii subsp. bulgaricus (strain ATCC 11842 / DSM 20081 / BCRC 10696 / JCM 1002 / NBRC 13953 / NCIMB 11778 / NCTC 12712 / WDCM 00102 / Lb 14).